The chain runs to 197 residues: Tic20 family protein Ycf60 (197 aa).

Helical transmembrane passes span 3–23, 47–66, 81–101, 118–138, and 141–161; these read IIIASYGVLIIVLAIGIGVGV, FGYYLLPVLECMTHCGPDVL, LVVVYSTYPILGFMIFFMSYF, VSQALIIYLLTSIIGSLLNAL, and MILMGWFGSTCLDILFILTMG.

This sequence belongs to the Tic20 family.

Its subcellular location is the plastid. The protein resides in the chloroplast membrane. The chain is Tic20 family protein Ycf60 (ycf60) from Cyanidioschyzon merolae (strain NIES-3377 / 10D) (Unicellular red alga).